The sequence spans 273 residues: Putative pyruvate, phosphate dikinase regulatory protein (273 aa).

An ADP-binding site is contributed by 149 to 156; it reads GPSRTSKT.

This sequence belongs to the pyruvate, phosphate/water dikinase regulatory protein family. PDRP subfamily.

The catalysed reaction is N(tele)-phospho-L-histidyl/L-threonyl-[pyruvate, phosphate dikinase] + ADP = N(tele)-phospho-L-histidyl/O-phospho-L-threonyl-[pyruvate, phosphate dikinase] + AMP + H(+). The enzyme catalyses N(tele)-phospho-L-histidyl/O-phospho-L-threonyl-[pyruvate, phosphate dikinase] + phosphate + H(+) = N(tele)-phospho-L-histidyl/L-threonyl-[pyruvate, phosphate dikinase] + diphosphate. In terms of biological role, bifunctional serine/threonine kinase and phosphorylase involved in the regulation of the pyruvate, phosphate dikinase (PPDK) by catalyzing its phosphorylation/dephosphorylation. The sequence is that of Putative pyruvate, phosphate dikinase regulatory protein from Rickettsia bellii (strain OSU 85-389).